Consider the following 339-residue polypeptide: Dihydroorotate dehydrogenase (quinone) (339 aa).

FMN contacts are provided by residues 62–66 (AGMDK) and threonine 86. Substrate is bound at residue lysine 66. 111-115 (NRMGF) provides a ligand contact to substrate. The FMN site is built by asparagine 139 and asparagine 172. Asparagine 172 is a substrate binding site. Serine 175 functions as the Nucleophile in the catalytic mechanism. Position 177 (asparagine 177) interacts with substrate. Residues lysine 217 and threonine 245 each contribute to the FMN site. Residue 246–247 (NT) participates in substrate binding. Residues glycine 268, glycine 297, and 318–319 (YS) contribute to the FMN site.

It belongs to the dihydroorotate dehydrogenase family. Type 2 subfamily. In terms of assembly, monomer. Requires FMN as cofactor.

It localises to the cell membrane. The catalysed reaction is (S)-dihydroorotate + a quinone = orotate + a quinol. Its pathway is pyrimidine metabolism; UMP biosynthesis via de novo pathway; orotate from (S)-dihydroorotate (quinone route): step 1/1. In terms of biological role, catalyzes the conversion of dihydroorotate to orotate with quinone as electron acceptor. The sequence is that of Dihydroorotate dehydrogenase (quinone) from Shewanella pealeana (strain ATCC 700345 / ANG-SQ1).